Here is a 1155-residue protein sequence, read N- to C-terminus: RhoGEF domain-containing protein gxcJ (1155 aa).

Disordered regions lie at residues Glu114 to Lys216, Leu259 to Asn333, Leu429 to Glu460, Leu484 to Thr508, and Ser604 to Gln639. 3 stretches are compositionally biased toward low complexity: residues Asn115 to Asn153, Thr161 to Asn211, and Asn260 to Asn303. Positions Asn192 to Leu257 form a coiled coil. A compositionally biased stretch (polar residues) spans Tyr304 to Glu319. Basic and acidic residues predominate over residues Asn320–Ile330. The segment covering Phe441 to Asp457 has biased composition (low complexity). A compositionally biased stretch (low complexity) spans Ser604–Asn637. Residues His700 to Gln874 form the DH domain. Residues Ser1084–Thr1155 are disordered. Composition is skewed to low complexity over residues Ser1093–Asn1121 and Gln1128–Gln1137.

Functionally, GTPase-activating protein. The sequence is that of RhoGEF domain-containing protein gxcJ (gxcJ) from Dictyostelium discoideum (Social amoeba).